The following is a 91-amino-acid chain: RNA-binding protein Hfq (91 aa).

The Sm domain occupies 9–69 (DRFLNMLRTG…ISTIMPSSFV (61 aa)).

Belongs to the Hfq family. In terms of assembly, homohexamer.

RNA chaperone that binds small regulatory RNA (sRNAs) and mRNAs to facilitate mRNA translational regulation in response to envelope stress, environmental stress and changes in metabolite concentrations. Also binds with high specificity to tRNAs. The chain is RNA-binding protein Hfq from Pseudothermotoga lettingae (strain ATCC BAA-301 / DSM 14385 / NBRC 107922 / TMO) (Thermotoga lettingae).